Here is a 114-residue protein sequence, read N- to C-terminus: Cell division protein FtsB (114 aa).

Residues 1–3 lie on the Cytoplasmic side of the membrane; it reads MGK. The chain crosses the membrane as a helical span at residues 4 to 21; that stretch reads LTLLLVVLLGWLQYSLWV. The Periplasmic segment spans residues 22–114; it reads GKNGVHDYMR…ASYPSVTASH (93 aa). The stretch at 31-62 forms a coiled coil; the sequence is RVKQDVATQQANNAKLKSRNDQLFAEIDDLNG.

Belongs to the FtsB family. Part of a complex composed of FtsB, FtsL and FtsQ.

It is found in the cell inner membrane. Its function is as follows. Essential cell division protein. May link together the upstream cell division proteins, which are predominantly cytoplasmic, with the downstream cell division proteins, which are predominantly periplasmic. The chain is Cell division protein FtsB from Edwardsiella ictaluri (strain 93-146).